The primary structure comprises 214 residues: Metalloproteinase inhibitor 3 (214 aa).

The first 26 residues, 1 to 26, serve as a signal peptide directing secretion; it reads MSVCALTLILGCFLLFLGDISKPAEG. Cysteine 27 is a binding site for Zn(2+). Involved in metalloproteinase-binding stretches follow at residues 27–30 and 91–92; these read CTCA and ES. Cystine bridges form between cysteine 27/cysteine 94, cysteine 29/cysteine 121, cysteine 39/cysteine 146, cysteine 148/cysteine 195, cysteine 153/cysteine 158, and cysteine 166/cysteine 187. The 120-residue stretch at 27-146 folds into the NTR domain; it reads CTCAPSHPQD…GLNHRYPLGC (120 aa).

This sequence belongs to the protease inhibitor I35 (TIMP) family.

The protein localises to the secreted. It is found in the extracellular space. It localises to the extracellular matrix. In terms of biological role, complexes with metalloproteinases (such as collagenases) and irreversibly inactivates them by binding to their catalytic zinc cofactor. May form part of a tissue-specific acute response to remodeling stimuli. The chain is Metalloproteinase inhibitor 3 (timp3) from Xenopus laevis (African clawed frog).